The sequence spans 338 residues: Nicotinate-nucleotide--dimethylbenzimidazole phosphoribosyltransferase (338 aa).

Glu-305 serves as the catalytic Proton acceptor.

This sequence belongs to the CobT family.

The enzyme catalyses 5,6-dimethylbenzimidazole + nicotinate beta-D-ribonucleotide = alpha-ribazole 5'-phosphate + nicotinate + H(+). Its pathway is nucleoside biosynthesis; alpha-ribazole biosynthesis; alpha-ribazole from 5,6-dimethylbenzimidazole: step 1/2. Its function is as follows. Catalyzes the synthesis of alpha-ribazole-5'-phosphate from nicotinate mononucleotide (NAMN) and 5,6-dimethylbenzimidazole (DMB). The protein is Nicotinate-nucleotide--dimethylbenzimidazole phosphoribosyltransferase of Rhizobium leguminosarum bv. trifolii (strain WSM2304).